A 330-amino-acid polypeptide reads, in one-letter code: Beta-hexosaminidase (330 aa).

Residues aspartate 62, arginine 70, arginine 130, and 160–161 (KH) contribute to the substrate site. Histidine 173 acts as the Proton donor/acceptor in catalysis. The active-site Nucleophile is aspartate 242.

This sequence belongs to the glycosyl hydrolase 3 family. NagZ subfamily. In terms of assembly, monomer.

It localises to the cytoplasm. The catalysed reaction is Hydrolysis of terminal non-reducing N-acetyl-D-hexosamine residues in N-acetyl-beta-D-hexosaminides.. It functions in the pathway cell wall biogenesis; peptidoglycan recycling. Functionally, plays a role in peptidoglycan recycling by cleaving the terminal beta-1,4-linked N-acetylglucosamine (GlcNAc) from peptide-linked peptidoglycan fragments, giving rise to free GlcNAc, anhydro-N-acetylmuramic acid and anhydro-N-acetylmuramic acid-linked peptides. Plays a role in beta-lactam antibiotic resistance via its role in generating anhydro-N-acetylmuramic acid-linked peptides; these peptides function as signaling molecules that induce high-level expression of the beta-lactamase AmpC. This Vibrio cholerae serotype O1 (strain ATCC 39315 / El Tor Inaba N16961) protein is Beta-hexosaminidase.